The sequence spans 755 residues: von Willebrand factor A domain-containing protein 2 (755 aa).

The N-terminal stretch at 1 to 23 is a signal peptide; that stretch reads MPPFLLLEAVCVFLFSRVPPSLP. The VWFA 1 domain maps to 51-222; that stretch reads DIMFLLDGSN…DATNGLFSTL (172 aa). Asn-147 carries an N-linked (GlcNAc...) asparagine glycan. The 38-residue stretch at 296–333 folds into the EGF-like 1 domain; that stretch reads PGPCDSQPCQNGGTCVPEGLDGYQCLCPLAFGGEANCA. 3 disulfide bridges follow: Cys-299-Cys-310, Cys-304-Cys-320, and Cys-322-Cys-332. 2 VWFA domains span residues 343–517 and 531–705; these read DLLF…QGKL and DLVF…IEWL. Residues 712–748 form the EGF-like 2 domain; it reads PVNLCKPSPCMNEGSCVLQNGSYRCKCRDGWEGPHCE. 3 disulfides stabilise this stretch: Cys-716–Cys-727, Cys-721–Cys-736, and Cys-738–Cys-747.

In terms of assembly, forms monomers and multimers. A 55 kDa form is produced by proteolytic cleavage. As to expression, expression is generally absent in normal colon and other normal body tissues, but it is induced an average of 78-fold in Stage II, III, and IV colon cancers, as well as in colon adenomas and colon cancer cell lines.

It is found in the secreted. This Homo sapiens (Human) protein is von Willebrand factor A domain-containing protein 2 (VWA2).